Reading from the N-terminus, the 181-residue chain is MNLLRTFNATLARRPLATQVIVSGAVCGAGDAFTQYLTGQKSWDYKRTARFTCLAAVFIAPPLNVWFRVLERVRHSNRHAQVFSRMSIDQFMFSPFFNAIILVNLRLLEGFSFSKSVDKMKNDWYDVYTSSLRLWPAVQLINFYFVPLNYRVILIQVVAFFWNSWLSFKTQTPALEDPTIE.

Transmembrane regions (helical) follow at residues 20–38 (VIVSGAVCGAGDAFTQYLT), 48–70 (TARFTCLAAVFIAPPLNVWFRVL), 91–113 (FMFSPFFNAIILVNLRLLEGFSF), and 140–162 (LINFYFVPLNYRVILIQVVAFFW).

This sequence belongs to the peroxisomal membrane protein PXMP2/4 family.

Its subcellular location is the mitochondrion inner membrane. Its function is as follows. Involved in mitochondria homeostasis. In Caenorhabditis briggsae, this protein is Mitochondrial inner membrane protein Mpv17.